We begin with the raw amino-acid sequence, 74 residues long: Amphipathic peptide CT1 (74 aa).

The signal sequence occupies residues 1–23; sequence MKTQIVILFISMIMLQMFVQIEG. Valine amide is present on Val-37. The propeptide occupies 41 to 74; the sequence is GLRNLDDLDDLDLDHLFDSDVSDADLRLLKQMFR.

The protein belongs to the non-disulfide-bridged peptide (NDBP) superfamily. Short antimicrobial peptide (group 4) family. As to expression, expressed by the venom gland.

Its subcellular location is the secreted. The protein resides in the target cell membrane. In terms of biological role, antimicrobial peptide that is rapidly bactericidal against Gram-positive bacteria (MIC=12.5 ug/ml against S.aureus, and MIC=100 ug/ml against M.luteus). Is also active against clinical antibiotics-resistant bacterial strains. The protein is Amphipathic peptide CT1 of Scorpiops tibetanus (Scorpion).